A 305-amino-acid chain; its full sequence is tRNA dimethylallyltransferase (305 aa).

8-15 (GPTAVGKT) contacts ATP. 10–15 (TAVGKT) lines the substrate pocket. Positions 33–36 (DSRQ) are interaction with substrate tRNA.

The protein belongs to the IPP transferase family. In terms of assembly, monomer. Mg(2+) serves as cofactor.

The enzyme catalyses adenosine(37) in tRNA + dimethylallyl diphosphate = N(6)-dimethylallyladenosine(37) in tRNA + diphosphate. In terms of biological role, catalyzes the transfer of a dimethylallyl group onto the adenine at position 37 in tRNAs that read codons beginning with uridine, leading to the formation of N6-(dimethylallyl)adenosine (i(6)A). In Thermotoga sp. (strain RQ2), this protein is tRNA dimethylallyltransferase.